Here is a 787-residue protein sequence, read N- to C-terminus: Replication origin-binding protein (787 aa).

Positions 39–195 (HFKTFSEQIK…SLCMPHFKSA (157 aa)) constitute a Helicase ATP-binding domain. 52–59 (APMGSGKT) is a binding site for ATP.

It belongs to the herpesviridae OriBP family.

Probably involved in DNA replication. Binds the origin of replication (ori). This Human herpesvirus 7 (strain JI) (HHV-7) protein is Replication origin-binding protein (U73).